The primary structure comprises 440 residues: MEKIIVRGGRQLSGSVKVEGAKNAVLPVIAASILASRGTSKIYDVPKLADVYTMKEVLRNLNINVEYENGEFVVNATNPLKTEAPFEYVRKMRASFLVMGPLLARVGHARIALPGGCAIGSRPIDQHLKGFEAMGATVEIGNGFIEAKVEGRLQGTKIYLDFPSVGATENIMMAAAMAEGTTILENAAEEPEIVCLANYLNAMGAKVRGAGTGVIRIEGVDELVGAEHTVISDRIEAGTFMVAAAITGGDVFIEGAVAEHLRPLIAKMHEMGVKTIEEDNGIRVIGPDELKPVDIKTMPHPGFPTDMQSQMMALLLRANGTSVITETVFENRFMHVEEFRRMNGNIKIEGRSAIISGPCQLQGAEVTATDLRAGAALVLAGLVADGHTRVVELKHVDRGYVDLAGKLARLGADIERVVETEHELENLDAPAPLKLNTNLV.

Position 22–23 (22–23) interacts with phosphoenolpyruvate; sequence KN. Position 93 (arginine 93) interacts with UDP-N-acetyl-alpha-D-glucosamine. Cysteine 117 serves as the catalytic Proton donor. 2-(S-cysteinyl)pyruvic acid O-phosphothioketal is present on cysteine 117. Residues 122 to 126, aspartate 306, and valine 328 each bind UDP-N-acetyl-alpha-D-glucosamine; that span reads RPIDQ.

The protein belongs to the EPSP synthase family. MurA subfamily.

The protein localises to the cytoplasm. It catalyses the reaction phosphoenolpyruvate + UDP-N-acetyl-alpha-D-glucosamine = UDP-N-acetyl-3-O-(1-carboxyvinyl)-alpha-D-glucosamine + phosphate. It participates in cell wall biogenesis; peptidoglycan biosynthesis. In terms of biological role, cell wall formation. Adds enolpyruvyl to UDP-N-acetylglucosamine. This is UDP-N-acetylglucosamine 1-carboxyvinyltransferase 1 from Halalkalibacterium halodurans (strain ATCC BAA-125 / DSM 18197 / FERM 7344 / JCM 9153 / C-125) (Bacillus halodurans).